A 445-amino-acid chain; its full sequence is Na(+)-translocating NADH-quinone reductase subunit A (445 aa).

Belongs to the NqrA family. In terms of assembly, composed of six subunits; NqrA, NqrB, NqrC, NqrD, NqrE and NqrF.

The enzyme catalyses a ubiquinone + n Na(+)(in) + NADH + H(+) = a ubiquinol + n Na(+)(out) + NAD(+). NQR complex catalyzes the reduction of ubiquinone-1 to ubiquinol by two successive reactions, coupled with the transport of Na(+) ions from the cytoplasm to the periplasm. NqrA to NqrE are probably involved in the second step, the conversion of ubisemiquinone to ubiquinol. In Pseudomonas aeruginosa (strain ATCC 15692 / DSM 22644 / CIP 104116 / JCM 14847 / LMG 12228 / 1C / PRS 101 / PAO1), this protein is Na(+)-translocating NADH-quinone reductase subunit A.